A 296-amino-acid chain; its full sequence is Putative peptide transport system permease protein BRA1093/BS1330_II1085 (296 aa).

Helical transmembrane passes span 35 to 55, 97 to 117, 131 to 151, 205 to 225, 229 to 249, and 260 to 280; these read IGLV…WITN, LWIG…IGIA, VMDA…SAAL, ILPN…AYAI, ATLS…GSIV, and WWIM…INLI. The ABC transmembrane type-1 domain occupies 97–281; that stretch reads LWIGLTVAVL…ISALAINLIG (185 aa).

Belongs to the binding-protein-dependent transport system permease family. The complex is composed of two ATP-binding proteins (BRA1094), two transmembrane proteins (BRA1092 and BRA1093) and a solute-binding protein (BRA1090).

It is found in the cell inner membrane. Probably part of an ABC transporter complex that could be involved in peptide import. Probably responsible for the translocation of the substrate across the membrane. The polypeptide is Putative peptide transport system permease protein BRA1093/BS1330_II1085 (Brucella suis biovar 1 (strain 1330)).